The sequence spans 228 residues: Putative N-acetylmannosamine-6-phosphate 2-epimerase (228 aa).

Belongs to the NanE family.

The catalysed reaction is an N-acyl-D-glucosamine 6-phosphate = an N-acyl-D-mannosamine 6-phosphate. It participates in amino-sugar metabolism; N-acetylneuraminate degradation; D-fructose 6-phosphate from N-acetylneuraminate: step 3/5. Its function is as follows. Converts N-acetylmannosamine-6-phosphate (ManNAc-6-P) to N-acetylglucosamine-6-phosphate (GlcNAc-6-P). This Thermosynechococcus vestitus (strain NIES-2133 / IAM M-273 / BP-1) protein is Putative N-acetylmannosamine-6-phosphate 2-epimerase.